A 242-amino-acid polypeptide reads, in one-letter code: Probable ergothioneine transport ATP-binding protein EgtUA (242 aa).

The ABC transporter domain maps to Ile-2–Phe-236. Residue Gly-34 to Thr-41 participates in ATP binding.

It belongs to the ABC transporter superfamily. In terms of assembly, the complex is probably composed of at least an ATP-binding protein (EgtUA) and a transmembrane protein (EgtUBC).

The protein resides in the cell inner membrane. It carries out the reaction ergothioneine(out) + ATP + H2O = ergothioneine(in) + ADP + phosphate + H(+). Functionally, part of an ABC transporter complex EgtU required for the uptake of ergothioneine (EGT), a natural low-molecular weight (LMW) thiol antioxidant. Probably responsible for energy coupling to the transport system. The polypeptide is Probable ergothioneine transport ATP-binding protein EgtUA (Streptococcus pneumoniae serotype 2 (strain D39 / NCTC 7466)).